Reading from the N-terminus, the 588-residue chain is Schlafen family member 12-like (588 aa).

The helical transmembrane segment at 566-586 (IFLFVCLFRFCLFVCWFVCFF) threads the bilayer.

It belongs to the Schlafen family.

Its subcellular location is the membrane. This chain is Schlafen family member 12-like (SLFN12L), found in Homo sapiens (Human).